Consider the following 270-residue polypeptide: uncharacterized protein (270 aa).

Belongs to the GSP E family.

This is an uncharacterized protein from Methanocaldococcus jannaschii (strain ATCC 43067 / DSM 2661 / JAL-1 / JCM 10045 / NBRC 100440) (Methanococcus jannaschii).